Consider the following 940-residue polypeptide: Phosphoenolpyruvate carboxylase (940 aa).

Residues His138 and Lys603 contribute to the active site.

This sequence belongs to the PEPCase type 1 family. Mg(2+) is required as a cofactor.

The catalysed reaction is oxaloacetate + phosphate = phosphoenolpyruvate + hydrogencarbonate. Functionally, forms oxaloacetate, a four-carbon dicarboxylic acid source for the tricarboxylic acid cycle. This chain is Phosphoenolpyruvate carboxylase, found in Streptococcus thermophilus (strain ATCC BAA-250 / LMG 18311).